The chain runs to 584 residues: DNA ligase (584 aa).

Residue Glu-249 participates in ATP binding. The active-site N6-AMP-lysine intermediate is Lys-251. Residues Arg-256, Arg-271, Glu-301, Phe-341, Arg-416, and Lys-422 each contribute to the ATP site.

Belongs to the ATP-dependent DNA ligase family. Requires Mg(2+) as cofactor.

It catalyses the reaction ATP + (deoxyribonucleotide)n-3'-hydroxyl + 5'-phospho-(deoxyribonucleotide)m = (deoxyribonucleotide)n+m + AMP + diphosphate.. DNA ligase that seals nicks in double-stranded DNA during DNA replication, DNA recombination and DNA repair. The chain is DNA ligase from Pyrobaculum neutrophilum (strain DSM 2338 / JCM 9278 / NBRC 100436 / V24Sta) (Thermoproteus neutrophilus).